Reading from the N-terminus, the 410-residue chain is 2-hydroxy-5-methyl-1-naphthoate 7-hydroxylase (410 aa).

A heme-binding site is contributed by cysteine 350.

Belongs to the cytochrome P450 family. Heme serves as cofactor.

The catalysed reaction is 2-hydroxy-5-methyl-1-naphthoate + 2 reduced [2Fe-2S]-[ferredoxin] + O2 + 2 H(+) = 2,7-dihydroxy-5-methyl-1-naphthoate + 2 oxidized [2Fe-2S]-[ferredoxin] + H2O. It participates in antibiotic biosynthesis. Its function is as follows. Involved in the biosynthesis of the naphthoic acid (NA) moiety in the chromophore of the enedyine antitumor antibiotic neocarzinostatin (NCS). Catalyzes the hydroxylation at C-7 position of 2-hydroxy-5-methyl-1-naphthoate to yield 2,7-dihydroxy-5-methyl-1-naphthoate. The sequence is that of 2-hydroxy-5-methyl-1-naphthoate 7-hydroxylase from Streptomyces carzinostaticus.